We begin with the raw amino-acid sequence, 168 residues long: Oleosin 18.2 kDa (168 aa).

At Ala-2 the chain carries N-acetylalanine. The tract at residues 2-45 (AEVRDRNLPHQVQVHPQYRLDNTTGGGYGAKNYHSGPSTSQVLA) is polar. A run of 3 helical transmembrane segments spans residues 43 to 63 (VLAV…AGLT), 76 to 96 (PLFI…AMAV), and 97 to 117 (TGFL…SYVL). The segment at 46-117 (VLTLLPIGGT…TGLSSLSYVL (72 aa)) is hydrophobic.

Belongs to the oleosin family.

The protein resides in the lipid droplet. It is found in the membrane. Its function is as follows. May have a structural role to stabilize the lipid body during desiccation of the seed by preventing coalescence of the oil. Probably interacts with both lipid and phospholipid moieties of lipid bodies. May also provide recognition signals for specific lipase anchorage in lipolysis during seedling growth. This Gossypium hirsutum (Upland cotton) protein is Oleosin 18.2 kDa (MATP6-A).